The chain runs to 701 residues: Nucleolar transcription factor 1-B (701 aa).

Positions 1–21 are disordered; that stretch reads MNGAAGGDTQGKMTAPKDQDQ. 5 DNA-binding regions (HMG box) span residues 112–180, 196–264, 298–362, 422–489, and 508–574; these read PKKP…AKFR, PEKP…REYM, TKPP…MRFL, PETP…SDMR, and KKAP…DTWM. The tract at residues 382–426 is disordered; it reads MKRKRTNTPASKMATEDAAKVKSRSGQADKKKAAEERAKLPETPK. Over residues 408-426 the composition is skewed to basic and acidic residues; that stretch reads QADKKKAAEERAKLPETPK. Residues 584 to 701 are disordered; that stretch reads AYKEQNTNKR…SADSSDSDSN (118 aa). Polar residues predominate over residues 597–612; sequence TKIQAPSSKSKLVIQS. Residues 615-682 show a composition bias toward acidic residues; that stretch reads DDDEDDEDDE…DNEEDDDDNE (68 aa). Positions 683–695 are enriched in low complexity; that stretch reads SGSSSSSSSSADS.

XUBF consists of 2 polypeptides of 82 and 85 kDa, encoded by the same or closely related genes.

It is found in the nucleus. Its function is as follows. UBF recognizes the ribosomal RNA gene promotor and activates transcription mediated by RNA polymerase I through cooperative interactions with the species-specific factor SL1. It binds specifically to the upstream control element. This is Nucleolar transcription factor 1-B (ubtf-b) from Xenopus laevis (African clawed frog).